Reading from the N-terminus, the 286-residue chain is 33 kDa chaperonin (286 aa).

Cystine bridges form between Cys-225–Cys-227 and Cys-258–Cys-261.

This sequence belongs to the HSP33 family. In terms of processing, under oxidizing conditions two disulfide bonds are formed involving the reactive cysteines. Under reducing conditions zinc is bound to the reactive cysteines and the protein is inactive.

The protein resides in the cytoplasm. Functionally, redox regulated molecular chaperone. Protects both thermally unfolding and oxidatively damaged proteins from irreversible aggregation. Plays an important role in the bacterial defense system toward oxidative stress. This is 33 kDa chaperonin from Shewanella sp. (strain MR-4).